Here is a 645-residue protein sequence, read N- to C-terminus: UPF0313 protein CLB_0243 (645 aa).

In terms of domain architecture, Radical SAM core spans 295-566 (AIKEVKFSIT…RMQRALLQFS (272 aa)). Cys-309, Cys-313, and Cys-316 together coordinate [4Fe-4S] cluster. The disordered stretch occupies residues 598–645 (NKPYKKSHKKNNAKNNNNHYNKNNNYNKNKDISKKNKKNSLSKHKKRK). Residues 600-609 (PYKKSHKKNN) show a composition bias toward basic residues. Residues 610–624 (AKNNNNHYNKNNNYN) are compositionally biased toward low complexity. Residues 632 to 645 (KNKKNSLSKHKKRK) show a composition bias toward basic residues.

The protein belongs to the UPF0313 family. [4Fe-4S] cluster is required as a cofactor.

This Clostridium botulinum (strain ATCC 19397 / Type A) protein is UPF0313 protein CLB_0243.